The chain runs to 330 residues: N-acetyl-gamma-glutamyl-phosphate reductase (330 aa).

C143 is a catalytic residue.

This sequence belongs to the NAGSA dehydrogenase family. Type 1 subfamily.

The protein resides in the cytoplasm. It carries out the reaction N-acetyl-L-glutamate 5-semialdehyde + phosphate + NADP(+) = N-acetyl-L-glutamyl 5-phosphate + NADPH + H(+). The protein operates within amino-acid biosynthesis; L-arginine biosynthesis; N(2)-acetyl-L-ornithine from L-glutamate: step 3/4. In terms of biological role, catalyzes the NADPH-dependent reduction of N-acetyl-5-glutamyl phosphate to yield N-acetyl-L-glutamate 5-semialdehyde. This is N-acetyl-gamma-glutamyl-phosphate reductase from Methanocorpusculum labreanum (strain ATCC 43576 / DSM 4855 / Z).